The primary structure comprises 49 residues: Small, acid-soluble spore protein K (49 aa).

Positions 1-49 are disordered; that stretch reads MRNKSRGFPNMNNNKFEGEPRAKDDFASKRPDGSTNTHPQERMRASGKR. 2 stretches are compositionally biased toward basic and acidic residues: residues 16-32 and 39-49; these read FEGE…KRPD and PQERMRASGKR.

The protein belongs to the SspK family.

It localises to the spore core. In Bacillus licheniformis (strain ATCC 14580 / DSM 13 / JCM 2505 / CCUG 7422 / NBRC 12200 / NCIMB 9375 / NCTC 10341 / NRRL NRS-1264 / Gibson 46), this protein is Small, acid-soluble spore protein K.